The following is a 515-amino-acid chain: Galactose/methyl galactoside import ATP-binding protein MglA (515 aa).

2 ABC transporter domains span residues 8–243 (LEMR…VGRE) and 254–499 (IPKE…AKYL). An ATP-binding site is contributed by 40 to 47 (GENGAGKS).

The protein belongs to the ABC transporter superfamily. Galactose/methyl galactoside importer (TC 3.A.1.2.3) family. As to quaternary structure, the complex is composed of one ATP-binding protein (MglA), two transmembrane proteins (MglC) and a solute-binding protein (MglB).

The protein localises to the cell membrane. The catalysed reaction is D-galactose(out) + ATP + H2O = D-galactose(in) + ADP + phosphate + H(+). The enzyme catalyses methyl beta-D-galactoside(out) + ATP + H2O = methyl beta-D-galactoside(in) + ADP + phosphate + H(+). In terms of biological role, part of the ABC transporter complex MglABC involved in galactose/methyl galactoside import. Responsible for energy coupling to the transport system. The protein is Galactose/methyl galactoside import ATP-binding protein MglA of Clostridium perfringens (strain 13 / Type A).